The primary structure comprises 365 residues: Alanine racemase (365 aa).

K32 acts as the Proton acceptor; specific for D-alanine in catalysis. Position 32 is an N6-(pyridoxal phosphate)lysine (K32). R128 provides a ligand contact to substrate. Y257 functions as the Proton acceptor; specific for L-alanine in the catalytic mechanism. Residue M305 coordinates substrate.

The protein belongs to the alanine racemase family. Requires pyridoxal 5'-phosphate as cofactor.

The enzyme catalyses L-alanine = D-alanine. The protein operates within amino-acid biosynthesis; D-alanine biosynthesis; D-alanine from L-alanine: step 1/1. Functionally, catalyzes the interconversion of L-alanine and D-alanine. May also act on other amino acids. This is Alanine racemase (alr) from Francisella tularensis subsp. holarctica (strain OSU18).